We begin with the raw amino-acid sequence, 384 residues long: Potassium channel subfamily K member 18 (384 aa).

At 1-23 (MEVSGHPQARRCCPEALGKLFPG) the chain is on the cytoplasmic side. A helical transmembrane segment spans residues 24-44 (LCFLCFLVTYALVGAVVFSAI). Asparagine 70 carries N-linked (GlcNAc...) asparagine glycosylation. The segment at residues 103–129 (FLSSLFFCCTVFSTVGYGYIYPVTRLG) is an intramembrane region (pore-forming). K(+) is bound by residues threonine 116, valine 117, glycine 118, and tyrosine 119. Residues 116-121 (TVGYGY) form a selectivity filter 1 region. Residues 130-148 (KYLCMLYALFGIPLMFLVL) form a helical membrane-spanning segment. Over 149–280 (TDTGDILATI…EVGQQVERLD (132 aa)) the chain is Cytoplasmic. Residues 200-205 (PQIIIS) form an interaction with calcineurin region. Residues 249 to 254 (RSNSCP) are interaction with YWHAH. 2 positions are modified to phosphoserine: serine 252 and serine 264. A helical transmembrane segment spans residues 281 to 301 (IPLPIIALIVFAYISCAAAIL). Residues 314–328 (FYFCFVTLTTIGFGD) constitute an intramembrane region (pore-forming). Residues 323-328 (TIGFGD) form a selectivity filter 2 region. Residues 335 to 355 (NFFLFFSIYIIVGMEIVFIAF) traverse the membrane as a helical segment. Residues 356–384 (KLVQNRLIDIYKNVMLFFAKGKFYHLVKK) are Cytoplasmic-facing.

Belongs to the two pore domain potassium channel (TC 1.A.1.8) family. In terms of assembly, homodimer. Heterodimer with KCNK2. Heterodimer with KCNK10. Interacts with calcineurin. Interacts with YWHAH, in a phosphorylation-dependent manner. In terms of processing, N-glycosylated. Post-translationally, phosphorylation of Ser-264 is required for the binding of 14-3-3eta/YWHAH. Calcineurin-mediated dephosphorylation enhances channel activity. In terms of tissue distribution, expressed in dorsal root ganglion and trigeminal ganglion neurons. Detected at low levels in spinal cord. Expressed in regulatory T cells (at protein level).

The protein resides in the cell membrane. It catalyses the reaction K(+)(in) = K(+)(out). With respect to regulation, activated by volatile anesthetics but inhibited by amide local anesthetics. Inhibited by Ba(2+) ions. Inhibited by free polyunsaturated fatty acids. Channel conductance is sensitive to intracellular pH, it decreases at acidic pH and increases at basic pH. In contrast to its mouse ortholog, it is not regulated by extracellular protons. Insensitive to changes in temperature. In terms of biological role, k(+) channel that conducts outward and inward rectifying currents at depolarized and hyperpolarized membrane potentials, respectively. The outward rectifying currents are voltage-dependent, coupled to K(+) electrochemical gradient across the membrane, whereas the inward currents can be induced in response to activation of Ca(2+)-mobilizing receptors. Homo- and heterodimerizes to form functional channels with distinct regulatory and gating properties. In trigeminal ganglia sensory neurons, the heterodimers of KCNK18/TRESK and KCNK2/TREK-1 or KCNK10/TREK-2 inhibit neuronal firing and neurogenic inflammation by stabilizing the resting membrane potential at K(+) equilibrium potential as well as by regulating the threshold of action potentials and the spike frequency. In thymocytes, conducts K(+) currents upon T cell receptor (TCR) signaling leading to sustained Ca(2+) influx and NF-kappa-B activation, FOXP3 transcription and positive selection of regulatory T cell (Treg) progenitor subsets. Appears to mediate the analgesics effects of hydroxy-alpha-sanshool, a metabolite naturally present in Schezuan pepper and other Xanthoxylum plants. In Homo sapiens (Human), this protein is Potassium channel subfamily K member 18.